A 165-amino-acid chain; its full sequence is Short form salivary protein D7R1 (165 aa).

Positions 1–21 (MFNKLHLVSLLACGLFVIAQA) are cleaved as a signal peptide. 3 disulfide bridges follow: Cys-27-Cys-59, Cys-40-Cys-164, and Cys-98-Cys-117. Residues Glu-28, His-56, Tyr-115, Asp-132, and Glu-135 each contribute to the serotonin site. 3 residues coordinate histamine: Tyr-115, Asp-132, and Glu-135.

The protein belongs to the PBP/GOBP family. Female salivary gland. Not detected in female carcass without salivary glands. Not detected in male tissues.

It localises to the secreted. Its function is as follows. Modulates blood feeding of female mosquitoes on vertebrate species by binding and sequestering different mediators involved in the host response. Binds serotonin and histamine. Increases blood clotting time. The chain is Short form salivary protein D7R1 from Anopheles gambiae (African malaria mosquito).